The sequence spans 266 residues: UPF0294 protein YafD (266 aa).

It belongs to the UPF0294 family.

Its subcellular location is the cytoplasm. The sequence is that of UPF0294 protein YafD from Salmonella newport (strain SL254).